Reading from the N-terminus, the 163-residue chain is MSTETKNYITPAGWQALKDELYQLVNKERPEIVQIVNWAAGNGDRSENGDYLYGKRRMREIDRRIRFLTKRLEAAVVVDPELREATDQVFFGATVGLLRGDGREQTVKIVGIDEIDTAQNKISWISPLARCLIKAREGDEVVLNTPEGREEIEILSVEYIKID.

A coiled-coil region spans residues 54 to 76 (GKRRMREIDRRIRFLTKRLEAAV).

It belongs to the GreA/GreB family. GreB subfamily.

In terms of biological role, necessary for efficient RNA polymerase transcription elongation past template-encoded arresting sites. The arresting sites in DNA have the property of trapping a certain fraction of elongating RNA polymerases that pass through, resulting in locked ternary complexes. Cleavage of the nascent transcript by cleavage factors such as GreA or GreB allows the resumption of elongation from the new 3'terminus. GreB releases sequences of up to 9 nucleotides in length. This chain is Transcription elongation factor GreB, found in Neisseria meningitidis serogroup A / serotype 4A (strain DSM 15465 / Z2491).